A 565-amino-acid chain; its full sequence is Estrogen receptor gamma (565 aa).

Positions 1-168 (MAVASSPEKD…TSGGKTDLHY (168 aa)) are modulating. 2 consecutive NR C4-type zinc fingers follow at residues 169 to 189 (CAVCHDYASGYHYGVWSCEGC) and 205 to 229 (CPATNECTIDKNRRKSCQACRLRKC). Positions 169-234 (CAVCHDYASG…RLRKCYEVGM (66 aa)) form a DNA-binding region, nuclear receptor. Residues 235–285 (TKCGMRKERGNYRSPQMRRMTRLTSQGRTDSSSVLTGSAVVSLNAPQPSAL) form a hinge region. In terms of domain architecture, NR LBD spans 286 to 516 (TSEQLIERLM…DLLLEMLDAH (231 aa)). The interval 522–565 (RLPRRSPEQEPEDQADAPAPPHSSGSGPSYTWTPSSSEGAGEPQ) is disordered.

It belongs to the nuclear hormone receptor family. NR3 subfamily. In terms of assembly, homodimer. In terms of tissue distribution, abundant in the ovary and testes, barely detectable in the brain and muscle and undetectable in the liver.

It is found in the nucleus. In terms of biological role, the steroid hormones and their receptors are involved in the regulation of eukaryotic gene expression and affect cellular proliferation and differentiation in target tissues. The polypeptide is Estrogen receptor gamma (esr3) (Micropogonias undulatus (Atlantic croaker)).